A 471-amino-acid polypeptide reads, in one-letter code: UDP-N-acetylmuramoylalanine--D-glutamate ligase (471 aa).

127–133 (GSNGKST) is a binding site for ATP.

Belongs to the MurCDEF family.

Its subcellular location is the cytoplasm. The catalysed reaction is UDP-N-acetyl-alpha-D-muramoyl-L-alanine + D-glutamate + ATP = UDP-N-acetyl-alpha-D-muramoyl-L-alanyl-D-glutamate + ADP + phosphate + H(+). The protein operates within cell wall biogenesis; peptidoglycan biosynthesis. Its function is as follows. Cell wall formation. Catalyzes the addition of glutamate to the nucleotide precursor UDP-N-acetylmuramoyl-L-alanine (UMA). This Colwellia psychrerythraea (strain 34H / ATCC BAA-681) (Vibrio psychroerythus) protein is UDP-N-acetylmuramoylalanine--D-glutamate ligase.